The following is a 346-amino-acid chain: Biotin synthase (346 aa).

A Radical SAM core domain is found at 38-256 (RQVQVSTLLS…IAVARIMMPT (219 aa)). [4Fe-4S] cluster contacts are provided by Cys53, Cys57, and Cys60. [2Fe-2S] cluster is bound by residues Cys97, Cys128, Cys188, and Arg260.

The protein belongs to the radical SAM superfamily. Biotin synthase family. In terms of assembly, homodimer. The cofactor is [4Fe-4S] cluster. It depends on [2Fe-2S] cluster as a cofactor.

It carries out the reaction (4R,5S)-dethiobiotin + (sulfur carrier)-SH + 2 reduced [2Fe-2S]-[ferredoxin] + 2 S-adenosyl-L-methionine = (sulfur carrier)-H + biotin + 2 5'-deoxyadenosine + 2 L-methionine + 2 oxidized [2Fe-2S]-[ferredoxin]. The protein operates within cofactor biosynthesis; biotin biosynthesis; biotin from 7,8-diaminononanoate: step 2/2. Functionally, catalyzes the conversion of dethiobiotin (DTB) to biotin by the insertion of a sulfur atom into dethiobiotin via a radical-based mechanism. This chain is Biotin synthase, found in Escherichia coli O6:K15:H31 (strain 536 / UPEC).